Here is a 213-residue protein sequence, read N- to C-terminus: ATP phosphoribosyltransferase (213 aa).

This sequence belongs to the ATP phosphoribosyltransferase family. Short subfamily. Heteromultimer composed of HisG and HisZ subunits.

The protein localises to the cytoplasm. The enzyme catalyses 1-(5-phospho-beta-D-ribosyl)-ATP + diphosphate = 5-phospho-alpha-D-ribose 1-diphosphate + ATP. It functions in the pathway amino-acid biosynthesis; L-histidine biosynthesis; L-histidine from 5-phospho-alpha-D-ribose 1-diphosphate: step 1/9. Catalyzes the condensation of ATP and 5-phosphoribose 1-diphosphate to form N'-(5'-phosphoribosyl)-ATP (PR-ATP). Has a crucial role in the pathway because the rate of histidine biosynthesis seems to be controlled primarily by regulation of HisG enzymatic activity. The polypeptide is ATP phosphoribosyltransferase (hisG) (Bacillus subtilis (strain 168)).